The sequence spans 299 residues: Putative ammonium transporter 4 member 1 (299 aa).

A run of 5 helical transmembrane segments spans residues 16–36 (AWPLAAATLVGLQSVPRLVIL), 59–79 (VLLTLAGAGLLLWMGWTGFNG), 104–124 (LLVWLLLDSFVFGRLSVISAV), 158–178 (VLHTHGVAGSLSGVLTGLLLL), and 218–238 (AGIAFVVALNVAVTSAVCLAV).

Belongs to the ammonia transporter channel (TC 1.A.11.2) family.

The protein resides in the membrane. The protein is Putative ammonium transporter 4 member 1 (AMT4-1) of Oryza sativa subsp. japonica (Rice).